The following is a 419-amino-acid chain: UDP-N-acetylmuramoylalanine--D-glutamate ligase (419 aa).

Glycine 109–threonine 115 provides a ligand contact to ATP.

It belongs to the MurCDEF family.

The protein resides in the cytoplasm. The catalysed reaction is UDP-N-acetyl-alpha-D-muramoyl-L-alanine + D-glutamate + ATP = UDP-N-acetyl-alpha-D-muramoyl-L-alanyl-D-glutamate + ADP + phosphate + H(+). Its pathway is cell wall biogenesis; peptidoglycan biosynthesis. Cell wall formation. Catalyzes the addition of glutamate to the nucleotide precursor UDP-N-acetylmuramoyl-L-alanine (UMA). The sequence is that of UDP-N-acetylmuramoylalanine--D-glutamate ligase from Chlamydia felis (strain Fe/C-56) (Chlamydophila felis).